Consider the following 241-residue polypeptide: 2-C-methyl-D-erythritol 4-phosphate cytidylyltransferase (241 aa).

The protein belongs to the IspD/TarI cytidylyltransferase family. IspD subfamily.

It catalyses the reaction 2-C-methyl-D-erythritol 4-phosphate + CTP + H(+) = 4-CDP-2-C-methyl-D-erythritol + diphosphate. Its pathway is isoprenoid biosynthesis; isopentenyl diphosphate biosynthesis via DXP pathway; isopentenyl diphosphate from 1-deoxy-D-xylulose 5-phosphate: step 2/6. Its function is as follows. Catalyzes the formation of 4-diphosphocytidyl-2-C-methyl-D-erythritol from CTP and 2-C-methyl-D-erythritol 4-phosphate (MEP). The polypeptide is 2-C-methyl-D-erythritol 4-phosphate cytidylyltransferase (Baumannia cicadellinicola subsp. Homalodisca coagulata).